The primary structure comprises 110 residues: CHH-like protein (110 aa).

Residues 1-23 (MHLSSVQFAWAALVALAVSAAGA) form the signal peptide. Residues 24–35 (LPSSAPHHVERR) constitute a propeptide that is removed on maturation. 3 disulfides stabilise this stretch: Cys42-Cys78, Cys58-Cys74, and Cys61-Cys87. Position 107 is a valine amide (Val107).

This sequence belongs to the arthropod CHH/MIH/GIH/VIH hormone family.

Its subcellular location is the secreted. This chain is CHH-like protein (CHHL), found in Bombyx mori (Silk moth).